A 351-amino-acid polypeptide reads, in one-letter code: Protein RecA (351 aa).

ATP is bound at residue 68–75 (GPESSGKT).

It belongs to the RecA family.

The protein localises to the cytoplasm. Functionally, can catalyze the hydrolysis of ATP in the presence of single-stranded DNA, the ATP-dependent uptake of single-stranded DNA by duplex DNA, and the ATP-dependent hybridization of homologous single-stranded DNAs. It interacts with LexA causing its activation and leading to its autocatalytic cleavage. The protein is Protein RecA of Thermotoga neapolitana (strain ATCC 49049 / DSM 4359 / NBRC 107923 / NS-E).